Here is a 918-residue protein sequence, read N- to C-terminus: Hexokinase-1 (918 aa).

At Met1 the chain carries N-acetylmethionine. A mitochondrial-binding peptide (MBP) region spans residues 1 to 10 (MIAAQLLAYY). Hexokinase domains follow at residues 16-458 (DDQV…MVTA) and 464-906 (AEQH…LITA). ATP contacts are provided by residues Arg30 and 84-89 (DLGGSS). The hexokinase small subdomain 1 stretch occupies residues 73 to 207 (DGSEKGDFIA…DYDANIVAVV (135 aa)). 84–91 (DLGGSSFR) lines the D-glucose 6-phosphate pocket. Residues Ser155, 172-173 (TK), and 208-209 (ND) each bind D-glucose. The segment at 208 to 447 (NDTVGTMIDC…SDVRFLLSES (240 aa)) is hexokinase large subdomain 1. Positions 209 and 232 each coordinate D-glucose 6-phosphate. Residues Asn235, Glu260, and 291-294 (QRFE) each bind D-glucose. Ser337 is subject to Phosphoserine. 413–415 (DGS) serves as a coordination point for D-glucose 6-phosphate. Residues 425–426 (RR) and 532–537 (DLGGTN) contribute to the ATP site. The interval 521-655 (DGTEDGDFLA…EFDLDVVAVV (135 aa)) is hexokinase small subdomain 2. Residue 532 to 536 (DLGGT) participates in D-glucose 6-phosphate binding. D-glucose-binding positions include 603–604 (SF), 620–621 (TK), and 656–657 (ND). The segment at 656–895 (NDTVGTMMTC…CNVSFLLSED (240 aa)) is hexokinase large subdomain 2. The D-glucose 6-phosphate site is built by Asp657 and Thr680. ATP is bound at residue Thr680. Residues 682 to 683 (SN), Glu708, and Glu742 contribute to the D-glucose site. ATP contacts are provided by residues 747-748 (GI), 784-788 (TKFLS), and 863-867 (TLYKL). D-glucose 6-phosphate-binding positions include 861 to 863 (DGT) and Ser897.

The protein belongs to the hexokinase family. As to quaternary structure, monomer. Interacts with RABL2/RABL2A; binds preferentially to GTP-bound RABL2. Interacts with VDAC1. The HK1-VDAC1 complex interacts with ATF2. Interacts (via N-terminal spermatogenic cell-specific region) with PFKM (via C-terminus). Interacts with SMAD5.

It is found in the mitochondrion outer membrane. The protein resides in the cytoplasm. Its subcellular location is the cytosol. The catalysed reaction is a D-hexose + ATP = a D-hexose 6-phosphate + ADP + H(+). The enzyme catalyses D-fructose + ATP = D-fructose 6-phosphate + ADP + H(+). It carries out the reaction D-glucose + ATP = D-glucose 6-phosphate + ADP + H(+). It catalyses the reaction D-mannose + ATP = D-mannose 6-phosphate + ADP + H(+). The catalysed reaction is D-glucosamine + ATP = D-glucosamine 6-phosphate + ADP + H(+). It functions in the pathway carbohydrate metabolism; hexose metabolism. The protein operates within carbohydrate degradation; glycolysis; D-glyceraldehyde 3-phosphate and glycerone phosphate from D-glucose: step 1/4. Hexokinase is an allosteric enzyme inhibited by its product D-glucose 6-phosphate. Hexokinase activity is inhibited by N-acetyl-D-glucosamine. Catalyzes the phosphorylation of various hexoses, such as D-glucose, D-glucosamine, D-fructose, D-mannose and 2-deoxy-D-glucose, to hexose 6-phosphate (D-glucose 6-phosphate, D-glucosamine 6-phosphate, D-fructose 6-phosphate, D-mannose 6-phosphate and 2-deoxy-D-glucose 6-phosphate, respectively). Does not phosphorylate N-acetyl-D-glucosamine. Mediates the initial step of glycolysis by catalyzing phosphorylation of D-glucose to D-glucose 6-phosphate. Involved in innate immunity and inflammation by acting as a pattern recognition receptor for bacterial peptidoglycan. When released in the cytosol, N-acetyl-D-glucosamine component of bacterial peptidoglycan inhibits the hexokinase activity of HK1 and causes its dissociation from mitochondrial outer membrane, thereby activating the NLRP3 inflammasome. The protein is Hexokinase-1 of Bos taurus (Bovine).